Reading from the N-terminus, the 182-residue chain is PTS system glucitol/sorbitol-specific EIIC component (182 aa).

Residues 1-182 (MDAIVYFAKG…IELSNQLKAN (182 aa)) enclose the PTS EIIC type-5 domain. Transmembrane regions (helical) follow at residues 28-48 (GIIPKVLLLLVFMNSIIAFIG), 63-83 (VILAYGVLPFLSAFMLGNPMA), and 139-159 (TALGLRYLLVGLVMNFFAGWV).

It is found in the cell membrane. Functionally, the phosphoenolpyruvate-dependent sugar phosphotransferase system (PTS), a major carbohydrate active transport system, catalyzes the phosphorylation of incoming sugar substrates concomitant with their translocation across the cell membrane. The enzyme II complex composed of SrlA, SrlB and SrlE is involved in glucitol/sorbitol transport. In Clostridium beijerinckii (strain ATCC 51743 / NCIMB 8052) (Clostridium acetobutylicum), this protein is PTS system glucitol/sorbitol-specific EIIC component (srlA).